The following is a 421-amino-acid chain: WD repeat and SOCS box-containing protein 1 (421 aa).

WD repeat units follow at residues 124 to 165, 168 to 208, 212 to 251, 254 to 293, and 309 to 346; these read SRCV…LLLN, DHIE…NMVK, AHQN…MIRK, GHHH…LLME, and ANDR…DCPV. The SOCS box domain occupies 372 to 421; it reads DGSVYFWATPRQVPSLQHICRMSIRRVMSTQEVQKLPVPSKILAFLSYRG.

As to quaternary structure, interacts with DIO2. Component of the probable ECS(WSB1) E3 ubiquitin-protein ligase complex which contains CUL5, RNF7/RBX2, Elongin BC complex and WSB1. Component of a probable ECS-like E3 ubiquitin-protein ligase complex which contains CUL5, RBX1, Elongin BC complex and WSB1. Interacts with CUL5, RNF7, ELOB and ELOC. Binds to HIPK2 through WD40 repeats.

It participates in protein modification; protein ubiquitination. Probable substrate-recognition component of a SCF-like ECS (Elongin-Cullin-SOCS-box protein) E3 ubiquitin ligase complex which mediates the ubiquitination and subsequent proteasomal degradation of target proteins. Recognizes type II iodothyronine deiodinase/DIO2. Confers constitutive instability to HIPK2 through proteasomal degradation. The polypeptide is WD repeat and SOCS box-containing protein 1 (Wsb1) (Mus musculus (Mouse)).